We begin with the raw amino-acid sequence, 137 residues long: Putative transcriptional regulatory protein MJ0173 (137 aa).

Belongs to the Tfx family.

Functionally, putative transcriptional regulator. The polypeptide is Putative transcriptional regulatory protein MJ0173 (Methanocaldococcus jannaschii (strain ATCC 43067 / DSM 2661 / JAL-1 / JCM 10045 / NBRC 100440) (Methanococcus jannaschii)).